The primary structure comprises 172 residues: Crossover junction endodeoxyribonuclease RuvC (172 aa).

Catalysis depends on residues Asp7, Glu67, and Asp140. Residues Asp7, Glu67, and Asp140 each contribute to the Mg(2+) site.

It belongs to the RuvC family. In terms of assembly, homodimer which binds Holliday junction (HJ) DNA. The HJ becomes 2-fold symmetrical on binding to RuvC with unstacked arms; it has a different conformation from HJ DNA in complex with RuvA. In the full resolvosome a probable DNA-RuvA(4)-RuvB(12)-RuvC(2) complex forms which resolves the HJ. Mg(2+) serves as cofactor.

The protein localises to the cytoplasm. The catalysed reaction is Endonucleolytic cleavage at a junction such as a reciprocal single-stranded crossover between two homologous DNA duplexes (Holliday junction).. In terms of biological role, the RuvA-RuvB-RuvC complex processes Holliday junction (HJ) DNA during genetic recombination and DNA repair. Endonuclease that resolves HJ intermediates. Cleaves cruciform DNA by making single-stranded nicks across the HJ at symmetrical positions within the homologous arms, yielding a 5'-phosphate and a 3'-hydroxyl group; requires a central core of homology in the junction. The consensus cleavage sequence is 5'-(A/T)TT(C/G)-3'. Cleavage occurs on the 3'-side of the TT dinucleotide at the point of strand exchange. HJ branch migration catalyzed by RuvA-RuvB allows RuvC to scan DNA until it finds its consensus sequence, where it cleaves and resolves the cruciform DNA. The chain is Crossover junction endodeoxyribonuclease RuvC from Syntrophomonas wolfei subsp. wolfei (strain DSM 2245B / Goettingen).